The sequence spans 410 residues: Class E basic helix-loop-helix protein 41 (410 aa).

Lys31 is covalently cross-linked (Glycyl lysine isopeptide (Lys-Gly) (interchain with G-Cter in SUMO2)). The region spanning 44 to 99 (TYKLPHRLIEKKRRDRINECIAQLKDLLPEHLKLTTLGHLEKAVVLELTLKHLKAL) is the bHLH domain. Lys121 participates in a covalent cross-link: Glycyl lysine isopeptide (Lys-Gly) (interchain with G-Cter in SUMO2). The Orange domain maps to 131 to 166 (FHSGFQTCAKEVLQYLARFESWTPREPRCAQLVSHL). Disordered regions lie at residues 209-251 (IQRT…SAAP) and 371-410 (EVAP…KDAP). Lys240 is covalently cross-linked (Glycyl lysine isopeptide (Lys-Gly) (interchain with G-Cter in SUMO2)).

In terms of assembly, homodimer. Heterodimer with BHLHE40/DEC1. Interacts with CIART. Interacts with BMAL1 and RXRA. Interacts with NR0B2 and HNF1A. In terms of tissue distribution, highly expressed in the caudate putamen, pineal gland, granular cell layer of the cerebellum, olfactory bulb, piriform cortex, hippocampus and hypothalamic nuclei. Moderately expressed in skeletal muscle, heart. Weakly expressed in lung.

Its subcellular location is the nucleus. Its function is as follows. Transcriptional repressor involved in the regulation of the circadian rhythm by negatively regulating the activity of the clock genes and clock-controlled genes. Acts as the negative limb of a novel autoregulatory feedback loop (DEC loop) which differs from the one formed by the PER and CRY transcriptional repressors (PER/CRY loop). Both these loops are interlocked as it represses the expression of PER1 and in turn is repressed by PER1/2 and CRY1/2. Represses the activity of the circadian transcriptional activator: CLOCK-BMAL1 heterodimer by competing for the binding to E-box elements (5'-CACGTG-3') found within the promoters of its target genes. Negatively regulates its own expression and the expression of DBP and BHLHE41/DEC2. Acts as a corepressor of RXR and the RXR-LXR heterodimers and represses the ligand-induced RXRA/B/G, NR1H3/LXRA, NR1H4 and VDR transactivation activity. Inhibits HNF1A-mediated transactivation of CYP1A2, CYP2E1 and CYP3A11. This is Class E basic helix-loop-helix protein 41 (Bhlhb3) from Rattus norvegicus (Rat).